Reading from the N-terminus, the 213-residue chain is MRNFIVTGTDTEVGKTYVSCLIVKSLREAGINAAGFKPVACGDRQDARLLREAGPKDLTLDELNPVFLRNATCPYVAARLENTKVDEKVILRAYDALSAAHECVVVEGVGGWEVPIGPGRNFSDMAADFKLPVLLVIGNKLGAINHALLTLNAIKERGLECLGIVFNNVKDEWDTACVTNRSMVEEFSDAPILGELIHGQDYMDMDVLLERLH.

Glu12–Tyr17 serves as a coordination point for ATP. Thr16 serves as a coordination point for Mg(2+). Residue Lys37 is part of the active site. ATP is bound by residues Asp46, Glu107 to Gly110, and Asn167 to Asn168. 2 residues coordinate Mg(2+): Asp46 and Glu107.

It belongs to the dethiobiotin synthetase family. Homodimer. It depends on Mg(2+) as a cofactor.

The protein localises to the cytoplasm. The enzyme catalyses (7R,8S)-7,8-diammoniononanoate + CO2 + ATP = (4R,5S)-dethiobiotin + ADP + phosphate + 3 H(+). The protein operates within cofactor biosynthesis; biotin biosynthesis; biotin from 7,8-diaminononanoate: step 1/2. Functionally, catalyzes a mechanistically unusual reaction, the ATP-dependent insertion of CO2 between the N7 and N8 nitrogen atoms of 7,8-diaminopelargonic acid (DAPA, also called 7,8-diammoniononanoate) to form a ureido ring. The protein is ATP-dependent dethiobiotin synthetase BioD of Akkermansia muciniphila (strain ATCC BAA-835 / DSM 22959 / JCM 33894 / BCRC 81048 / CCUG 64013 / CIP 107961 / Muc).